Consider the following 551-residue polypeptide: Interleukin-2 receptor subunit beta (551 aa).

The first 26 residues, 1-26 (MATLALSWCLPLLILLLPLATSSASA), serve as a signal peptide directing secretion. Over 27–240 (AVNGTSRFTC…TKPAALGKDT (214 aa)) the chain is Extracellular. Asparagine 29, asparagine 43, and asparagine 71 each carry an N-linked (GlcNAc...) asparagine glycan. An intrachain disulfide couples cysteine 36 to cysteine 46. The cysteines at positions 74 and 86 are disulfide-linked. The Fibronectin type-III domain occupies 134-234 (APISLQVVHV…QPLAFRTKPA (101 aa)). An N-linked (GlcNAc...) asparagine glycan is attached at asparagine 149. The WSXWS motif motif lies at 220 to 224 (WSPWS). Residues 241–265 (IPWLGHLLVGLSGAFGFIILVYLLI) traverse the membrane as a helical segment. Residues 266 to 551 (NCRNTGPWLK…LQDQDPTHLV (286 aa)) are Cytoplasmic-facing. Positions 278–286 (LKCHTPDPS) match the Box 1 motif motif. Disordered regions lie at residues 389–417 (EEEP…EDDA), 430–484 (FSPS…DLVD), and 496–517 (AGEQ…ARPP).

This sequence belongs to the type I cytokine receptor family. Type 4 subfamily. As to quaternary structure, non-covalent dimer of an alpha and a beta subunit. IL2R exists in 3 different forms: a high affinity dimer, an intermediate affinity monomer (beta subunit), and a low affinity monomer (alpha subunit). The high and intermediate affinity forms also associate with a gamma subunit. Interacts with SHB upon interleukin stimulation.

It is found in the cell membrane. It localises to the cell surface. Receptor for interleukin-2. This beta subunit is involved in receptor mediated endocytosis and transduces the mitogenic signals of IL2. Probably in association with IL15RA, involved in the stimulation of neutrophil phagocytosis by IL15. The chain is Interleukin-2 receptor subunit beta (IL2RB) from Macaca fascicularis (Crab-eating macaque).